A 453-amino-acid polypeptide reads, in one-letter code: UPF0210 protein Mbar_A3181 (453 aa).

Belongs to the UPF0210 family.

This is UPF0210 protein Mbar_A3181 from Methanosarcina barkeri (strain Fusaro / DSM 804).